A 364-amino-acid chain; its full sequence is tRNA 2-selenouridine synthase (364 aa).

The Rhodanese domain occupies 14 to 137 (LIADTPIIDV…LRQTTIQATI (124 aa)). Catalysis depends on Cys-97, which acts as the S-selanylcysteine intermediate.

The protein belongs to the SelU family. As to quaternary structure, monomer.

It catalyses the reaction 5-methylaminomethyl-2-thiouridine(34) in tRNA + selenophosphate + (2E)-geranyl diphosphate + H2O + H(+) = 5-methylaminomethyl-2-selenouridine(34) in tRNA + (2E)-thiogeraniol + phosphate + diphosphate. The catalysed reaction is 5-methylaminomethyl-2-thiouridine(34) in tRNA + (2E)-geranyl diphosphate = 5-methylaminomethyl-S-(2E)-geranyl-thiouridine(34) in tRNA + diphosphate. The enzyme catalyses 5-methylaminomethyl-S-(2E)-geranyl-thiouridine(34) in tRNA + selenophosphate + H(+) = 5-methylaminomethyl-2-(Se-phospho)selenouridine(34) in tRNA + (2E)-thiogeraniol. It carries out the reaction 5-methylaminomethyl-2-(Se-phospho)selenouridine(34) in tRNA + H2O = 5-methylaminomethyl-2-selenouridine(34) in tRNA + phosphate. In terms of biological role, involved in the post-transcriptional modification of the uridine at the wobble position (U34) of tRNA(Lys), tRNA(Glu) and tRNA(Gln). Catalyzes the conversion of 2-thiouridine (S2U-RNA) to 2-selenouridine (Se2U-RNA). Acts in a two-step process involving geranylation of 2-thiouridine (S2U) to S-geranyl-2-thiouridine (geS2U) and subsequent selenation of the latter derivative to 2-selenouridine (Se2U) in the tRNA chain. In Escherichia coli O139:H28 (strain E24377A / ETEC), this protein is tRNA 2-selenouridine synthase.